We begin with the raw amino-acid sequence, 400 residues long: General L-amino acid transport system permease protein AapQ (400 aa).

8 consecutive transmembrane segments (helical) span residues 29 to 49, 100 to 120, 142 to 162, 188 to 208, 225 to 245, 264 to 284, 340 to 360, and 367 to 387; these read SIFY…WVAH, LLVA…IGIG, IPPL…LPQP, TGMI…IIIA, VWTA…VSGF, VVGP…ASFI, NSSL…GTIL, and IEIV…TSLF. Residues 96 to 388 enclose the ABC transmembrane type-1 domain; the sequence is ILNTLLVAVT…SLSILTSLFM (293 aa).

It belongs to the binding-protein-dependent transport system permease family. HisMQ subfamily.

It localises to the cell inner membrane. In terms of biological role, part of a binding-protein-dependent transport system for L-amino acids, affects the uptake as well as efflux of these amino acids. Probably responsible for the translocation of the substrate across the membrane. The sequence is that of General L-amino acid transport system permease protein AapQ (aapQ) from Rhizobium johnstonii (strain DSM 114642 / LMG 32736 / 3841) (Rhizobium leguminosarum bv. viciae).